Reading from the N-terminus, the 581-residue chain is Activating signal cointegrator 1 (581 aa).

Position 2 is an N-acetylalanine (alanine 2). The interval 97–118 (KSGDHLKRGRKKGRNRQEVPAF) is disordered. The C4-type zinc finger occupies 171 to 187 (CDCLGQKHKLINNCLIC). Positions 200–300 (CLFCGTLVCT…ASDSNQWLSK (101 aa)) are mediates interaction with DDRGK1. Residue serine 276 is modified to Phosphoserine. Tyrosine 289 is subject to Phosphotyrosine. Residues 300-400 (KLERETLQKR…WVDHTGAASQ (101 aa)) are mediates interaction with UFL1. Residues lysine 324, lysine 325, and lysine 334 each participate in a glycyl lysine isopeptide (Lys-Gly) (interchain with G-Cter in UFM1) cross-link. Serine 341 bears the Phosphoserine mark. Lysine 367 participates in a covalent cross-link: Glycyl lysine isopeptide (Lys-Gly) (interchain with G-Cter in UFM1). In terms of domain architecture, ASCH spans 437 to 531 (LSVHQPWASL…FKEQFPDISQ (95 aa)).

In terms of assembly, interacts with the thyroid hormone receptor/TR (via the ligand-binding domain); this interaction requires the presence of thyroid hormone. Interacts with the androgen receptor/AR; in an androgen, testosterone and dihydrotestosterone-dependent manner. Interacts with ESR1 (estrogen ligand-bound); competes with UFSP2. Interacts with UFSP2; competes with ligand-bound ESR1. Interacts with DDRGK1 and UFL1; the interaction with DDRGK1 is direct. Interacts with NCOA1. Interacts with EP300. Part of the ASC-1 complex, that contains TRIP4, ASCC1, ASCC2 and ASCC3. Identified in the RQT (ribosome quality control trigger) complex, that contains ASCC2, ASCC3 and TRIP4. Interacts with NEK6. Interacts with CSRP1. Interacts with ZCCHC4. In terms of processing, phosphorylated by NEK6. Polyufmylated by the UFM1-conjugating system composed of the enzymes UBA5, UFC1 and UFL1. Deufmylated by the protease UFSP2. Ufmylation of TRIP4 is promoted by ligand-bound nuclear receptors that compete with UFSP2 for interaction with TRIP4. Nuclear receptors-induced ufmylation promotes the recruitment of additional transcriptional coactivators like EP300 and NCOA1 and therefore the assembly of a coactivator complex facilitating nuclear receptor-mediated transcription.

It localises to the nucleus. The protein localises to the cytoplasm. The protein resides in the cytosol. Its subcellular location is the cytoskeleton. It is found in the microtubule organizing center. It localises to the centrosome. Its function is as follows. Transcription coactivator which associates with nuclear receptors, transcriptional coactivators including EP300, CREBBP and NCOA1, and basal transcription factors like TBP and TFIIA to facilitate nuclear receptors-mediated transcription. May thereby play an important role in establishing distinct coactivator complexes under different cellular conditions. Plays a role in thyroid hormone receptor and estrogen receptor transactivation. Also involved in androgen receptor transactivation. Plays a pivotal role in the transactivation of NF-kappa-B, SRF and AP1. Acts as a mediator of transrepression between nuclear receptor and either AP1 or NF-kappa-B. May play a role in the development of neuromuscular junction. May play a role in late myogenic differentiation. Also functions as part of the RQC trigger (RQT) complex that activates the ribosome quality control (RQC) pathway, a pathway that degrades nascent peptide chains during problematic translation. The chain is Activating signal cointegrator 1 from Homo sapiens (Human).